A 347-amino-acid chain; its full sequence is NADH-ubiquinone oxidoreductase chain 2 (347 aa).

The next 10 membrane-spanning stretches (helical) occupy residues 4-21 (LALIMITTTIILGTVIVM), 26-44 (WLLVWIGFEMNMLAVIPVL), 59-79 (YFLTQATASMLLMLAVVTNLL), 93-115 (LASTVMTLALAMKLGLSPFHFWV), 149-169 (LNLNLLLAMATVSVAVGGWGG), 178-198 (ILAYSSIAHMGWMTIILTYNP), 200-220 (LTLLNLLLYILMTATTFMLFM), 241-261 (ATSVLIIMLSLGGLPPLSGFL), 274-294 (ESIFLPTLMAMMALLSLYFYM), and 323-343 (TPLLSPLIVMSTLALPLAPIL).

The protein belongs to the complex I subunit 2 family. Core subunit of respiratory chain NADH dehydrogenase (Complex I) which is composed of 45 different subunits. Interacts with TMEM242.

It is found in the mitochondrion inner membrane. The enzyme catalyses a ubiquinone + NADH + 5 H(+)(in) = a ubiquinol + NAD(+) + 4 H(+)(out). Core subunit of the mitochondrial membrane respiratory chain NADH dehydrogenase (Complex I) which catalyzes electron transfer from NADH through the respiratory chain, using ubiquinone as an electron acceptor. Essential for the catalytic activity and assembly of complex I. The protein is NADH-ubiquinone oxidoreductase chain 2 of Cardioderma cor (Heart-nosed bat).